The sequence spans 85 residues: uncharacterized protein (85 aa).

It localises to the mitochondrion. This is an uncharacterized protein from Paramecium tetraurelia.